Reading from the N-terminus, the 133-residue chain is Small ribosomal subunit protein eS24z (133 aa).

The segment at 104-133 is disordered; that stretch reads KSRKQIKERKNRAKKIRGVKKTKAGDAKKK. The span at 109-125 shows a compositional bias: basic residues; that stretch reads IKERKNRAKKIRGVKKT.

It belongs to the eukaryotic ribosomal protein eS24 family.

This Arabidopsis thaliana (Mouse-ear cress) protein is Small ribosomal subunit protein eS24z (RPS24A).